The primary structure comprises 221 residues: Transcription factor bHLH126 (221 aa).

2 disordered regions span residues 1 to 46 (MDPY…KKLL) and 104 to 132 (RRDELSRETGQGYKSNPDPGKTGSDVGKS). Residues 42–94 (KKKLLHRDIERQRRQEMATLFATLRTHLPLKYIKGKRAVSDHVNGAVNFIKDT) enclose the bHLH domain.

In terms of assembly, homodimer.

Its subcellular location is the nucleus. The polypeptide is Transcription factor bHLH126 (BHLH126) (Arabidopsis thaliana (Mouse-ear cress)).